The sequence spans 123 residues: Ribosome-binding factor A (123 aa).

The protein belongs to the RbfA family. In terms of assembly, monomer. Binds 30S ribosomal subunits, but not 50S ribosomal subunits or 70S ribosomes.

Its subcellular location is the cytoplasm. Its function is as follows. One of several proteins that assist in the late maturation steps of the functional core of the 30S ribosomal subunit. Associates with free 30S ribosomal subunits (but not with 30S subunits that are part of 70S ribosomes or polysomes). Required for efficient processing of 16S rRNA. May interact with the 5'-terminal helix region of 16S rRNA. This chain is Ribosome-binding factor A, found in Ralstonia pickettii (strain 12J).